Here is a 257-residue protein sequence, read N- to C-terminus: UPF0246 protein Daro_2893 (257 aa).

It belongs to the UPF0246 family.

The chain is UPF0246 protein Daro_2893 from Dechloromonas aromatica (strain RCB).